The primary structure comprises 215 residues: Cytochrome b6 (215 aa).

A helical transmembrane segment spans residues Ile32–Phe52. Cys35 is a heme c binding site. Heme b is bound by residues His86 and His100. 3 consecutive transmembrane segments (helical) span residues Ala90–Phe110, Leu116–Tyr136, and Leu186–Ile206. Heme b is bound by residues His187 and His202.

It belongs to the cytochrome b family. PetB subfamily. The 4 large subunits of the cytochrome b6-f complex are cytochrome b6, subunit IV (17 kDa polypeptide, PetD), cytochrome f and the Rieske protein, while the 4 small subunits are PetG, PetL, PetM and PetN. The complex functions as a dimer. It depends on heme b as a cofactor. Requires heme c as cofactor.

It is found in the plastid. Its subcellular location is the chloroplast thylakoid membrane. Functionally, component of the cytochrome b6-f complex, which mediates electron transfer between photosystem II (PSII) and photosystem I (PSI), cyclic electron flow around PSI, and state transitions. This chain is Cytochrome b6, found in Chlorella vulgaris (Green alga).